Reading from the N-terminus, the 276-residue chain is D-aminoacyl-tRNA deacylase (276 aa).

This sequence belongs to the DtdA deacylase family. Monomer. It depends on Zn(2+) as a cofactor.

The catalysed reaction is a D-aminoacyl-tRNA + H2O = a tRNA + a D-alpha-amino acid + H(+). It catalyses the reaction glycyl-tRNA(Ala) + H2O = tRNA(Ala) + glycine + H(+). Functionally, D-aminoacyl-tRNA deacylase with broad substrate specificity. By recycling D-aminoacyl-tRNA to D-amino acids and free tRNA molecules, this enzyme counteracts the toxicity associated with the formation of D-aminoacyl-tRNA entities in vivo. This chain is D-aminoacyl-tRNA deacylase, found in Staphylothermus marinus (strain ATCC 43588 / DSM 3639 / JCM 9404 / F1).